The sequence spans 986 residues: Anoctamin-1 (986 aa).

At 1–333 (MRVNEKYSTL…FGEKIGLYFA (333 aa)) the chain is on the cytoplasmic side. Positions 79–121 (LVRRVQHSDTPSGARSVKQDHPLPGKGASLDAGSGEPPMDYHE) are disordered. Ser107 and Ser196 each carry phosphoserine. The helical transmembrane segment at 334-354 (WLGVYTQMLIPASIVGIIVFL) threads the bilayer. Residues 355–406 (YGCATMDENIPSMEMCDQRHNITMCPLCDKTCSYWKMSSACATARASHLFDN) lie on the Extracellular side of the membrane. Disulfide bonds link Cys370-Cys395, Cys379-Cys862, Cys382-Cys386, and Cys651-Cys656. The helical transmembrane segment at 407–427 (PATVFFSVFMALWAATFMEHW) threads the bilayer. Glu425 contributes to the Ca(2+) binding site. The Cytoplasmic segment spans residues 428–519 (KRKQMRLNYR…RDRFPAYLTN (92 aa)). Residues 520 to 540 (LVSIIFMIAVTFAIVLGVIIY) traverse the membrane as a helical segment. Topologically, residues 541–568 (RISMAAALAMNSSPSVRSNIRVTVTATA) are extracellular. Residues 569-589 (VIINLVVIILLDEVYGCIARW) form a helical membrane-spanning segment. Topologically, residues 590 to 607 (LTKIEVPKTEKSFEERLI) are cytoplasmic. The helical transmembrane segment at 608–628 (FKAFLLKFVNSYTPIFYVAFF) threads the bilayer. The Extracellular segment spans residues 629–657 (KGRFVGRPGDYVYIFRSFRMEECAPGGCL). Residues 658-678 (MELCIQLSIIMLGKQLIQNNL) form a helical membrane-spanning segment. 6 residues coordinate Ca(2+): Asn677, Glu680, Glu728, Glu731, Glu760, and Asp764. Topologically, residues 679–725 (FEIGIPKMKKLIRYLKLKQQSPPDHEECVKRKQRYEVDYNLEPFAGL) are cytoplasmic. 2 helical membrane-spanning segments follow: residues 726–746 (TPEY…VASF) and 747–767 (PLAP…DAKK). The Cytoplasmic portion of the chain corresponds to 768–784 (FVTELRRPVAVRAKDIG). Residues 785–805 (IWYNILRGIGKLAVIINAFVI) form a helical membrane-spanning segment. Topologically, residues 806–892 (SFTSDFIPRL…FWAVLAARLA (87 aa)) are extracellular. N-linked (GlcNAc...) asparagine glycosylation occurs at Asn832. A helical transmembrane segment spans residues 893–913 (FVIVFQNLVMFMSDFVDWVIP). The Ca(2+) site is built by Asp909 and Asp914. Over 914-986 (DIPKDISQQI…PSHAYHGGVL (73 aa)) the chain is Cytoplasmic. Basic and acidic residues predominate over residues 951-960 (KERQKDEPPC). Residues 951-986 (KERQKDEPPCNHHNTKACPDSLGSPAPSHAYHGGVL) are disordered.

Belongs to the anoctamin family. In terms of assembly, homodimer. Interacts with CFTR. Interacts with TRPV4. Expressed in nasal epithelial cells (at protein level). In the kidney, expressed in the collecting duct (at protein level). Broadly expressed with higher levels in liver, skeletal muscle and gastrointestinal muscles. Expressed in eccrine sweat glands.

It is found in the apical cell membrane. The protein resides in the presynapse. The enzyme catalyses chloride(in) = chloride(out). With respect to regulation, ATP and calmodulin are essential for its activation. Channel activity is inhibited by CFTR protein and by chloride inhibitors such as niflumic acid (NFA) and 4,4'-diisothiocyanatostilbene-2,2'-disulfonic acid (DIDS). Activated by heat with activation seen at temperatures above 44 degrees Celsius. Activated by BDNF in radial glial cells. In terms of biological role, calcium-activated chloride channel (CaCC). Plays a role in transepithelial anion transport and smooth muscle contraction. Required for the normal functioning of the interstitial cells of Cajal (ICCs) which generate electrical pacemaker activity in gastrointestinal smooth muscles. Acts as a major contributor to basal and stimulated chloride conductance in airway epithelial cells and plays an important role in tracheal cartilage development. Required for CFTR activation by enhancing endoplasmic reticulum Ca(2+) store release and is also required for CFTR membrane expression. Required for basal and ATP-dependent mucus secretion in airways and intestine, probably by controlling exocytosis of mucus-filled granules by providing Ca(2+) to an apical signaling compartment. Contributes to airway mucus expression induced by interleukins IL3 and IL8 and by the asthma-associated protein CLCA1 and is required for expression of mucin MUC5AC. However, was shown in another study not to be required for MUC5AC expression. Plays a role in the propagation of Ca(2+) waves in Kolliker's organ in the cochlea and contributes to the refinement of auditory brainstem circuitries prior to hearing onset. In vomeronasal sensory neurons, modulates spontaneous firing patterns in the absence of stimuli as well as the firing pattern of pheromone-evoked activity. Responsible for calcium-activated chloride channel activity in type I taste cells of the vallate papillae. Acts as a heat sensor in nociceptive neurons. In dorsal root ganglion neurons, plays a role in mediating non-histaminergic Mas-related G-protein coupled receptor (MRGPR)-dependent itching, acting as a downstream effector of MRGPRs. In the developing brain, required for the Ca(2+)-dependent process extension of radial glial cells. Functionally, calcium-activated chloride channel (CaCC). Contributes to calcium-activated chloride secretion in human sweat gland epithelial cells. Shows increased basal chloride permeability and decreased Ca(2+)-induced chloride permeability. Calcium-activated chloride channel (CaCC). Shows increased sensitivity to intracellular Ca(2+). The chain is Anoctamin-1 (ANO1) from Homo sapiens (Human).